The following is a 400-amino-acid chain: Formate-dependent phosphoribosylglycinamide formyltransferase (400 aa).

N(1)-(5-phospho-beta-D-ribosyl)glycinamide-binding positions include 22 to 23 and Glu82; that span reads EL. ATP contacts are provided by residues Arg115, Lys156, 161 to 166, 196 to 199, and Glu204; these read SSGKGQ and EGFI. The ATP-grasp domain occupies 120–309; it reads RLAAETLGLP…EFALHARAIL (190 aa). Mg(2+)-binding residues include Glu268 and Glu280. N(1)-(5-phospho-beta-D-ribosyl)glycinamide contacts are provided by residues Asp287, Lys361, and 368–369; that span reads RR.

The protein belongs to the PurK/PurT family. Homodimer.

The catalysed reaction is N(1)-(5-phospho-beta-D-ribosyl)glycinamide + formate + ATP = N(2)-formyl-N(1)-(5-phospho-beta-D-ribosyl)glycinamide + ADP + phosphate + H(+). Its pathway is purine metabolism; IMP biosynthesis via de novo pathway; N(2)-formyl-N(1)-(5-phospho-D-ribosyl)glycinamide from N(1)-(5-phospho-D-ribosyl)glycinamide (formate route): step 1/1. Functionally, involved in the de novo purine biosynthesis. Catalyzes the transfer of formate to 5-phospho-ribosyl-glycinamide (GAR), producing 5-phospho-ribosyl-N-formylglycinamide (FGAR). Formate is provided by PurU via hydrolysis of 10-formyl-tetrahydrofolate. The chain is Formate-dependent phosphoribosylglycinamide formyltransferase from Xanthomonas campestris pv. campestris (strain 8004).